The primary structure comprises 366 residues: Peptide chain release factor 2 (366 aa).

Glutamine 246 bears the N5-methylglutamine mark.

The protein belongs to the prokaryotic/mitochondrial release factor family. Methylated by PrmC. Methylation increases the termination efficiency of RF2.

It is found in the cytoplasm. In terms of biological role, peptide chain release factor 2 directs the termination of translation in response to the peptide chain termination codons UGA and UAA. The chain is Peptide chain release factor 2 from Frankia casuarinae (strain DSM 45818 / CECT 9043 / HFP020203 / CcI3).